The primary structure comprises 644 residues: Chaperone protein DnaK (644 aa).

Phosphothreonine; by autocatalysis is present on threonine 199. Residues 605-644 (KKSSEGQAAQGQTQSQESTKPVEEGVVDAEFEEVKEEDKK) are disordered. The segment covering 609-623 (EGQAAQGQTQSQEST) has biased composition (polar residues). A compositionally biased stretch (acidic residues) spans 629–644 (GVVDAEFEEVKEEDKK).

It belongs to the heat shock protein 70 family.

Its function is as follows. Acts as a chaperone. In Legionella pneumophila (strain Paris), this protein is Chaperone protein DnaK.